Reading from the N-terminus, the 198-residue chain is Ion-translocating oxidoreductase complex subunit B (198 aa).

A hydrophobic region spans residues 1–26 (MTTIMIAVLAIALLATLFGAILGFAS). Positions 32 to 90 (EADPIVDQIDAILPQTQCGQCGYPGCRPYAEAIANGDSINKCPPGGQATIEKLADLMGV) constitute a 4Fe-4S domain. [4Fe-4S] cluster-binding residues include Cys49, Cys52, Cys57, Cys73, Cys114, Cys117, Cys120, Cys124, Cys144, Cys147, Cys150, and Cys154. 4Fe-4S ferredoxin-type domains lie at 105 to 134 (KVAF…GGTK) and 135 to 164 (ALHT…MIPL).

This sequence belongs to the 4Fe4S bacterial-type ferredoxin family. RnfB subfamily. The complex is composed of six subunits: RnfA, RnfB, RnfC, RnfD, RnfE and RnfG. The cofactor is [4Fe-4S] cluster.

It localises to the cell inner membrane. In terms of biological role, part of a membrane-bound complex that couples electron transfer with translocation of ions across the membrane. This is Ion-translocating oxidoreductase complex subunit B from Vibrio vulnificus (strain CMCP6).